Reading from the N-terminus, the 469-residue chain is Interstitial collagenase (469 aa).

Positions 1 to 18 are cleaved as a signal peptide; that stretch reads MLSLPLLLLLLWGMGSHS. Positions 19 to 99 are cleaved as a propeptide — activation peptide; sequence FPTVPSETRE…PRCGVPDVAE (81 aa). A Cysteine switch motif is present at residues 90-97; sequence PRCGVPDV. Cys92 serves as a coordination point for Zn(2+). Positions 124 and 158 each coordinate Ca(2+). Residues His168 and Asp170 each contribute to the Zn(2+) site. The Ca(2+) site is built by Asp175, Gly176, Gly178, and Asn180. His183 provides a ligand contact to Zn(2+). 3 residues coordinate Ca(2+): Arg190, Gly192, and Asp194. Residue His196 coordinates Zn(2+). 3 residues coordinate Ca(2+): Asp198, Glu199, and Glu201. His218 contributes to the Zn(2+) binding site. Glu219 is an active-site residue. Positions 222 and 228 each coordinate Zn(2+). The residue at position 274 (Thr274) is a Phosphothreonine. Hemopexin repeat units follow at residues 275–324, 325–371, 374–422, and 423–466; these read PEVC…WPQL, PNGL…FGFP, VKNI…FPGI, and GDKV…WFNC. Residues Cys278 and Cys466 are joined by a disulfide bond. Residues Asp285 and Gln329 each coordinate Ca(2+). Tyr360 is subject to Phosphotyrosine; by PKDCC. The Ca(2+) site is built by Asp378 and Asp427.

The protein belongs to the peptidase M10A family. Ca(2+) is required as a cofactor. It depends on Zn(2+) as a cofactor. Tyrosine phosphorylated in platelets by PKDCC/VLK.

The protein resides in the secreted. It localises to the extracellular space. It is found in the extracellular matrix. It carries out the reaction Cleavage of the triple helix of collagen at about three-quarters of the length of the molecule from the N-terminus, at 775-Gly-|-Ile-776 in the alpha1(I) chain. Cleaves synthetic substrates and alpha-macroglobulins at bonds where P1' is a hydrophobic residue.. Its activity is regulated as follows. Can be activated without removal of the activation peptide. Cleaves collagens of types I, II, and III at one site in the helical domain. Also cleaves collagens of types VII and X. The chain is Interstitial collagenase (MMP1) from Equus caballus (Horse).